A 658-amino-acid polypeptide reads, in one-letter code: Integrator complex subunit 9 (658 aa).

K58 is covalently cross-linked (Glycyl lysine isopeptide (Lys-Gly) (interchain with G-Cter in SUMO2)). Positions 548 to 573 (DNKHVLQPPPRPTQPTGGKKRKRASD) are disordered. The Nuclear localization signal motif lies at 566–570 (KKRKR).

The protein belongs to the metallo-beta-lactamase superfamily. RNA-metabolizing metallo-beta-lactamase-like family. INTS9 subfamily. Component of the Integrator complex, composed of core subunits INTS1, INTS2, INTS3, INTS4, INTS5, INTS6, INTS7, INTS8, INTS9/RC74, INTS10, INTS11/CPSF3L, INTS12, INTS13, INTS14 and INTS15. The core complex associates with protein phosphatase 2A subunits PPP2CA and PPP2R1A, to form the Integrator-PP2A (INTAC) complex. INTS9 is part of the RNA endonuclease subcomplex, composed of INTS4, INTS9, INTS11 and inositol hexakisphosphate (InsP6). Interacts with WDR73; interaction is required for the assembly of the RNA endonuclease subcomplex in the cytoplasm. Interacts with BRAT1; interaction is required for the assembly of the RNA endonuclease subcomplex. Interacts with ESRRB, ESRRB is not a core component of the Integrator complex and this association is a bridge for the interaction with the multiprotein complex Integrator; attracts the transcriptional machinery.

Its subcellular location is the nucleus. It is found in the cytoplasm. Component of the integrator complex, a multiprotein complex that terminates RNA polymerase II (Pol II) transcription in the promoter-proximal region of genes. The integrator complex provides a quality checkpoint during transcription elongation by driving premature transcription termination of transcripts that are unfavorably configured for transcriptional elongation: the complex terminates transcription by (1) catalyzing dephosphorylation of the C-terminal domain (CTD) of Pol II subunit POLR2A/RPB1 and SUPT5H/SPT5, (2) degrading the exiting nascent RNA transcript via endonuclease activity and (3) promoting the release of Pol II from bound DNA. The integrator complex is also involved in terminating the synthesis of non-coding Pol II transcripts, such as enhancer RNAs (eRNAs), small nuclear RNAs (snRNAs), telomerase RNAs and long non-coding RNAs (lncRNAs). Mediates recruitment of cytoplasmic dynein to the nuclear envelope, probably as component of the integrator complex. This Bos taurus (Bovine) protein is Integrator complex subunit 9 (INTS9).